We begin with the raw amino-acid sequence, 315 residues long: MVGPWVYLVAAVLLIGLILFLTRSRGRAAAADGEPLHNEEERAGAGQVGRSLPQESEEQRTGSRPRRRRDLGSRLQAQRRAQRVAWEDGDENVGQTVIPAQEEEGIEKPAEVHPTGKIGAKKLRKLEEKQARKAQREAEEAEREERKRLESQREAEWKKEEERLRLKEEQKEEEERKAQEEQARREHEEYLKLKEAFVVEEEGVSETMTEEQSHSFLTEFINYIKKSKVVLLEDLAFQMGLRTQDAINRIQDLLTEGTLTGVIDDRGKFIYITPEELAAVANFIRQRGRVSITELAQASNSLISWGQDLPAQASA.

Residues 1–28 (MVGPWVYLVAAVLLIGLILFLTRSRGRA) traverse the membrane as a helical segment. Residues 1–115 (MVGPWVYLVA…IEKPAEVHPT (115 aa)) form a mediates interaction with CDK5RAP3 region. At 29–315 (AAADGEPLHN…GQDLPAQASA (287 aa)) the chain is on the cytoplasmic side. Residues 30–184 (AADGEPLHNE…ERKAQEEQAR (155 aa)) form a disordered region. Positions 34–43 (EPLHNEEERA) are enriched in basic and acidic residues. At Ser-73 the chain carries Phosphoserine. Residues 119-217 (GAKKLRKLEE…MTEEQSHSFL (99 aa)) form a mediates interaction with TRIP4 region. The segment covering 125 to 184 (KLEEKQARKAQREAEEAEREERKRLESQREAEWKKEEERLRLKEEQKEEEERKAQEEQAR) has biased composition (basic and acidic residues). A UFM1-interacting motif (UFIM) motif is present at residues 196–210 (AFVVEEEGVSETMTE). The mediates interaction with UFL1 stretch occupies residues 217 to 315 (LTEFINYIKK…GQDLPAQASA (99 aa)). One can recognise a PCI domain in the interval 230–274 (VLLEDLAFQMGLRTQDAINRIQDLLTEGTLTGVIDDRGKFIYITP). Lys-268 is covalently cross-linked (Glycyl lysine isopeptide (Lys-Gly) (interchain with G-Cter in UFM1)).

It belongs to the DDRGK1 family. Component of the UFM1 ribosome E3 ligase (UREL) complex, composed of UFL1, DDRGK1 and CDK5RAP3. Interacts with (unphosphorylated) ERN1/IRE1-alpha; interaction is dependent on UFM1 and takes place in response to endoplasmic reticulum stress, regulating ERN1/IRE1-alpha stability. Interacts with NFKBIA. Interacts with SOX9. In terms of processing, ufmylated; conjugated to ubiquitin-like protein UFM1, probably at Lys-268 by UFL1. The relevance of ufmylation is however unclear: as DDRGK1 acts as a substrate adapter for ufmylation, it is uncertain whether ufmylation is a collateral effect of the ufmylation process or whether it is required to regulate its activity. Ubiquitinated. Ubiquitination probably triggers proteasomal degradation and is negatively regulated by UFL1, the enzyme involved in the ufmylation of DDRGK1. Ubiquitously expressed. Higher expression in pancreatic islets, pancreatic acini and testis (at protein level). Highly expressed in the intestinal exocrine cells.

The protein localises to the endoplasmic reticulum membrane. Component of the UFM1 ribosome E3 ligase (UREL) complex, a multiprotein complex that catalyzes ufmylation of endoplasmic reticulum-docked proteins. The UREL complex plays a key role in ribosome recycling by mediating mono-ufmylation of the RPL26/uL24 subunit of the 60S ribosome following ribosome dissociation: ufmylation weakens the junction between post-termination 60S subunits and SEC61 translocons, promoting release and recycling of the large ribosomal subunit from the endoplasmic reticulum membrane. Ufmylation of RPL26/uL24 and subsequent 60S ribosome recycling either take place after normal termination of translation or after ribosome stalling during cotranslational translocation at the endoplasmic reticulum. Within the UREL complex, DDRGK1 tethers the complex to the endoplasmic reticulum membrane to restrict its activity to endoplasmic reticulum-docked ribosomes and acts as an ufmylation 'reader': following RPL26/uL24 ufmylation, DDRGK1 specifically binds to ufmylated RPL26/uL24 via its UFIM motif, resulting in stable association between the 60S ribosome and the UREL complex, followed by dissociation of the 60S ribosome subunit from the endoplasmic reticulum membrane. The UREL complex is also involved in reticulophagy in response to endoplasmic reticulum stress by promoting ufmylation of proteins such as CYB5R3 and RPN1, thereby promoting lysosomal degradation of ufmylated proteins. Ufmylation-dependent reticulophagy inhibits the unfolded protein response (UPR) by regulating ERN1/IRE1-alpha stability. Acts as a regulator of immunity by promoting differentiation of B-cells into plasma cells: acts by promoting expansion of the endoplasmic reticulum and regulating the unfolded protein response (UPR). May also be required for TRIP4 ufmylation. May play a role in NF-kappa-B-mediated transcription through regulation of the phosphorylation and the degradation of NFKBIA, the inhibitor of NF-kappa-B. Plays a role in cartilage development through SOX9, inhibiting the ubiquitin-mediated proteasomal degradation of this transcriptional regulator. Required for stabilization and ufmylation of ATG9A. The sequence is that of DDRGK domain-containing protein 1 from Mus musculus (Mouse).